The following is a 265-amino-acid chain: Small ribosomal subunit protein eS4 (265 aa).

The region spanning 42–104 (LPLILIIRNR…TNENYRLLYD (63 aa)) is the S4 RNA-binding domain.

Belongs to the eukaryotic ribosomal protein eS4 family.

The protein resides in the cytoplasm. The polypeptide is Small ribosomal subunit protein eS4 (RPS4) (Zea mays (Maize)).